The following is a 264-amino-acid chain: Agamous-like MADS-box protein AGL15 (264 aa).

The MADS-box domain occupies 3 to 57; the sequence is RGKIEIKRIENANSRQVTFSKRRAGLLKKAHELSVLCDAEVAVIVFSKSGKLFEF. In terms of domain architecture, K-box spans 87–177; sequence NQEECTEVDL…RRQVQELRSF (91 aa). The segment at 223–264 is disordered; sequence LQLGLPGEAHDTRKNEGDRESPSSDSVTTSTTRATAQRISLV. Positions 230-244 are enriched in basic and acidic residues; it reads EAHDTRKNEGDRESP. Residues 245–257 show a composition bias toward low complexity; the sequence is SSDSVTTSTTRAT.

The protein localises to the nucleus. Probable transcription factor. This is Agamous-like MADS-box protein AGL15 (AGL15) from Brassica napus (Rape).